A 233-amino-acid polypeptide reads, in one-letter code: Large ribosomal subunit protein uL2 (233 aa).

A disordered region spans residues 194–233 (HPHGGGNHQHVGRPSTVGRGTPPGRKVGRLSPKRRKKYGR). The span at 219–233 (KVGRLSPKRRKKYGR) shows a compositional bias: basic residues.

The protein belongs to the universal ribosomal protein uL2 family. Part of the 50S ribosomal subunit. Forms a bridge to the 30S subunit in the 70S ribosome.

One of the primary rRNA binding proteins. Required for association of the 30S and 50S subunits to form the 70S ribosome, for tRNA binding and peptide bond formation. It has been suggested to have peptidyltransferase activity; this is somewhat controversial. Makes several contacts with the 16S rRNA in the 70S ribosome. This Picrophilus torridus (strain ATCC 700027 / DSM 9790 / JCM 10055 / NBRC 100828 / KAW 2/3) protein is Large ribosomal subunit protein uL2.